Consider the following 214-residue polypeptide: MGRRPARCYRYCKNKPYPKSRFCRGVPDAKIRIFDLGRKKAKVDEFPLCGHMVSDEYEQLSSEALEAARICANKYMVKSCGKDGFHIRVRLHPFHVIRINKMLSCAGADRLQTGMRGAFGKPQGTVARVHIGQVIMSIRTKLQNKEHVVEALRRAKFKFPGRQKIHISKKWGFTKFNADEFEDMVAEKRLIPDGCGVKYIPNRGPLDKWRALHS.

Arginine 32 is subject to Citrulline. Lysine 175 participates in a covalent cross-link: Glycyl lysine isopeptide (Lys-Gly) (interchain with G-Cter in SUMO2). Lysine 188 is covalently cross-linked (Glycyl lysine isopeptide (Lys-Gly) (interchain with G-Cter in ubiquitin)).

The protein belongs to the universal ribosomal protein uL16 family. In terms of assembly, component of the large ribosomal subunit. Mature ribosomes consist of a small (40S) and a large (60S) subunit. The 40S subunit contains about 33 different proteins and 1 molecule of RNA (18S). The 60S subunit contains about 49 different proteins and 3 molecules of RNA (28S, 5.8S and 5S). Post-translationally, citrullinated by PADI4. In terms of processing, ufmylated by UFL1.

Its subcellular location is the cytoplasm. Its function is as follows. Component of the large ribosomal subunit. Plays a role in the formation of actively translating ribosomes. May play a role in the embryonic brain development. The sequence is that of Large ribosomal subunit protein uL16 (RPL10) from Oryctolagus cuniculus (Rabbit).